A 417-amino-acid polypeptide reads, in one-letter code: Serine hydroxymethyltransferase (417 aa).

Lys-54 carries the post-translational modification N6-acetyllysine. Residues Leu-121 and Gly-125–Leu-127 each bind (6S)-5,6,7,8-tetrahydrofolate. At Lys-229 the chain carries N6-(pyridoxal phosphate)lysine. N6-acetyllysine is present on residues Lys-250, Lys-285, and Lys-354. Ser-355–Phe-357 contributes to the (6S)-5,6,7,8-tetrahydrofolate binding site. An N6-acetyllysine modification is found at Lys-375.

It belongs to the SHMT family. As to quaternary structure, homodimer. It depends on pyridoxal 5'-phosphate as a cofactor.

The protein resides in the cytoplasm. It catalyses the reaction (6R)-5,10-methylene-5,6,7,8-tetrahydrofolate + glycine + H2O = (6S)-5,6,7,8-tetrahydrofolate + L-serine. It participates in one-carbon metabolism; tetrahydrofolate interconversion. It functions in the pathway amino-acid biosynthesis; glycine biosynthesis; glycine from L-serine: step 1/1. Its function is as follows. Catalyzes the reversible interconversion of serine and glycine with tetrahydrofolate (THF) serving as the one-carbon carrier. This reaction serves as the major source of one-carbon groups required for the biosynthesis of purines, thymidylate, methionine, and other important biomolecules. Also exhibits THF-independent aldolase activity toward beta-hydroxyamino acids, producing glycine and aldehydes, via a retro-aldol mechanism. This is Serine hydroxymethyltransferase from Escherichia coli O157:H7.